We begin with the raw amino-acid sequence, 239 residues long: Pyridoxine 5'-phosphate synthase (239 aa).

Residue asparagine 7 participates in 3-amino-2-oxopropyl phosphate binding. 9–10 (DH) is a binding site for 1-deoxy-D-xylulose 5-phosphate. Arginine 18 contacts 3-amino-2-oxopropyl phosphate. Histidine 43 functions as the Proton acceptor in the catalytic mechanism. Arginine 45 and histidine 50 together coordinate 1-deoxy-D-xylulose 5-phosphate. Catalysis depends on glutamate 70, which acts as the Proton acceptor. Residue threonine 100 coordinates 1-deoxy-D-xylulose 5-phosphate. The Proton donor role is filled by histidine 191. 3-amino-2-oxopropyl phosphate is bound by residues glycine 192 and 213 to 214 (GH).

The protein belongs to the PNP synthase family. Homooctamer; tetramer of dimers.

It localises to the cytoplasm. It catalyses the reaction 3-amino-2-oxopropyl phosphate + 1-deoxy-D-xylulose 5-phosphate = pyridoxine 5'-phosphate + phosphate + 2 H2O + H(+). It functions in the pathway cofactor biosynthesis; pyridoxine 5'-phosphate biosynthesis; pyridoxine 5'-phosphate from D-erythrose 4-phosphate: step 5/5. Its function is as follows. Catalyzes the complicated ring closure reaction between the two acyclic compounds 1-deoxy-D-xylulose-5-phosphate (DXP) and 3-amino-2-oxopropyl phosphate (1-amino-acetone-3-phosphate or AAP) to form pyridoxine 5'-phosphate (PNP) and inorganic phosphate. This chain is Pyridoxine 5'-phosphate synthase, found in Synechococcus sp. (strain JA-2-3B'a(2-13)) (Cyanobacteria bacterium Yellowstone B-Prime).